The chain runs to 147 residues: MRVIIQRVKGSSVRVNGEIVGQISRGLNLLVGIGNNDTESELDWMTRKCLELRLFPAEEGGDRWEKSVQEIQGELLVISQFTLYGDCRKGRRPSFSDSASPSIAKTLYDQFVAQLKDSGLKVETGIFGAMMQVTIDNDGPVTLLLER.

The short motif at 139 to 140 (GP) is the Gly-cisPro motif, important for rejection of L-amino acids element.

This sequence belongs to the DTD family. Homodimer.

The protein localises to the cytoplasm. It catalyses the reaction glycyl-tRNA(Ala) + H2O = tRNA(Ala) + glycine + H(+). The catalysed reaction is a D-aminoacyl-tRNA + H2O = a tRNA + a D-alpha-amino acid + H(+). Functionally, an aminoacyl-tRNA editing enzyme that deacylates mischarged D-aminoacyl-tRNAs. Also deacylates mischarged glycyl-tRNA(Ala), protecting cells against glycine mischarging by AlaRS. Acts via tRNA-based rather than protein-based catalysis; rejects L-amino acids rather than detecting D-amino acids in the active site. By recycling D-aminoacyl-tRNA to D-amino acids and free tRNA molecules, this enzyme counteracts the toxicity associated with the formation of D-aminoacyl-tRNA entities in vivo and helps enforce protein L-homochirality. This Rippkaea orientalis (strain PCC 8801 / RF-1) (Cyanothece sp. (strain PCC 8801)) protein is D-aminoacyl-tRNA deacylase.